Here is a 341-residue protein sequence, read N- to C-terminus: Dihydroorotate dehydrogenase (quinone) (341 aa).

FMN is bound by residues 59–63 (AGLDK) and threonine 83. Residue lysine 63 coordinates substrate. 108 to 112 (NRMGF) provides a ligand contact to substrate. FMN contacts are provided by asparagine 136 and asparagine 169. Substrate is bound at residue asparagine 169. The active-site Nucleophile is serine 172. Substrate is bound at residue asparagine 174. Lysine 214 and threonine 242 together coordinate FMN. A substrate-binding site is contributed by 243 to 244 (NT). FMN is bound by residues glycine 265, glycine 294, and 315 to 316 (YS).

This sequence belongs to the dihydroorotate dehydrogenase family. Type 2 subfamily. In terms of assembly, monomer. Requires FMN as cofactor.

The protein resides in the cell membrane. The catalysed reaction is (S)-dihydroorotate + a quinone = orotate + a quinol. The protein operates within pyrimidine metabolism; UMP biosynthesis via de novo pathway; orotate from (S)-dihydroorotate (quinone route): step 1/1. Catalyzes the conversion of dihydroorotate to orotate with quinone as electron acceptor. This Neisseria meningitidis serogroup C (strain 053442) protein is Dihydroorotate dehydrogenase (quinone).